The following is a 374-amino-acid chain: 5-methylthioribulose-1-phosphate isomerase (374 aa).

Belongs to the RuBisCO large chain family. Type IV subfamily.

The enzyme catalyses 5-(methylsulfanyl)-D-ribulose 1-phosphate = S-methyl-1-thio-D-xylulose 5-phosphate. It carries out the reaction 5-(methylsulfanyl)-D-ribulose 1-phosphate = 1-(methylsulfanyl)ribulose 5-phosphate. It participates in amino-acid biosynthesis; L-methionine biosynthesis via salvage pathway. The protein operates within metabolic intermediate biosynthesis; 1-deoxy-D-xylulose 5-phosphate biosynthesis. Functionally, catalyzes the conversion of 5-methylthio-D-ribulose 1-phosphate (MTRu-1P) to a 3:1 mixture of 1-methylthioxylulose 5-phosphate (MTXu-5P) and 1-methylthioribulose 5-phosphate (MTRu-5P). Involved in the MTA-isoprenoid shunt of the methionine salvage pathway. In Rhodospirillum rubrum (strain ATCC 11170 / ATH 1.1.1 / DSM 467 / LMG 4362 / NCIMB 8255 / S1), this protein is 5-methylthioribulose-1-phosphate isomerase.